The chain runs to 447 residues: MREIVHIQAGQCGNQIGAKFWEIISDEHGIDATGAYHGDSDLQLERINVYYNEASGGKYVPRAVLVDLEPGTMDSVRSGPFGQIFRPDNFVFGQSGAGNNWAKGHYTEGAELVDSVLDVVRKEAESCDCLQGFQLTHSLGGGTGSGMGTLLISKIREEYPDRIMNTYSVVPSPKVSDTVVEPYNATLSVHQLVENTDETYCIDNEALYDICFRTLKLTTPTYGDLNHLVSLTMSGVTTCLRFPGQLNADLRKLAVNMVPFPRLHFFMPGFAPLTSRGSQQYRALTVPELTQQMFDAKNMMAACDPRHGRYLTVAAIFRGRMSMKEVDEQMLNIQNKNSSYFVEWIPNNVKTAVCDIPPRGLKMSATFIGNSTAIQELFKRISEQFTAMFRRKAFLHWYTGEGMDEMEFTEAESNMNDLVSEYQQYQEATADEDAEFEEEQEAEVEEN.

Residues Gln-11, Glu-69, Ser-138, Gly-142, Thr-143, Gly-144, Asn-204, and Asn-226 each coordinate GTP. Glu-69 contributes to the Mg(2+) binding site. Residues 427–447 form a disordered region; that stretch reads EATADEDAEFEEEQEAEVEEN. A compositionally biased stretch (acidic residues) spans 429 to 447; the sequence is TADEDAEFEEEQEAEVEEN.

The protein belongs to the tubulin family. Dimer of alpha and beta chains. A typical microtubule is a hollow water-filled tube with an outer diameter of 25 nm and an inner diameter of 15 nM. Alpha-beta heterodimers associate head-to-tail to form protofilaments running lengthwise along the microtubule wall with the beta-tubulin subunit facing the microtubule plus end conferring a structural polarity. Microtubules usually have 13 protofilaments but different protofilament numbers can be found in some organisms and specialized cells. The cofactor is Mg(2+).

It localises to the cytoplasm. Its subcellular location is the cytoskeleton. Its function is as follows. Tubulin is the major constituent of microtubules, a cylinder consisting of laterally associated linear protofilaments composed of alpha- and beta-tubulin heterodimers. Microtubules grow by the addition of GTP-tubulin dimers to the microtubule end, where a stabilizing cap forms. Below the cap, tubulin dimers are in GDP-bound state, owing to GTPase activity of alpha-tubulin. The protein is Tubulin beta-1 chain of Glossina morsitans morsitans (Savannah tsetse fly).